The sequence spans 195 residues: MKRIGLLGGSFDPVHLAHLALARAAAAELRLDSVQLIPAANPWQRAPLRASAGHRLRMIELAIDGEPQLAVNPVELERGGPTYTIDTVRALPADAHYVWLLGTDQLANFCTWRQWQAIAGHVDLAVAARPGAPLAAPAELASWLAAHRRRLIRLPFSPMAISASDIRGRLARGASTAGLLPATVARYIARHGLYR.

It belongs to the NadD family.

It catalyses the reaction nicotinate beta-D-ribonucleotide + ATP + H(+) = deamido-NAD(+) + diphosphate. It functions in the pathway cofactor biosynthesis; NAD(+) biosynthesis; deamido-NAD(+) from nicotinate D-ribonucleotide: step 1/1. Catalyzes the reversible adenylation of nicotinate mononucleotide (NaMN) to nicotinic acid adenine dinucleotide (NaAD). The polypeptide is Probable nicotinate-nucleotide adenylyltransferase (Bordetella petrii (strain ATCC BAA-461 / DSM 12804 / CCUG 43448)).